The following is a 484-amino-acid chain: UDP-glucose:undecaprenyl-phosphate glucose-1-phosphate transferase (484 aa).

The next 5 helical transmembrane spans lie at 37 to 57, 59 to 79, 93 to 113, 122 to 142, and 299 to 319; these read MVVASGLIAYRIVFGTWVPAA, YRVAIATTLLYSVICFALFPL, VVLGGAFGGVFALFAVHALIV, GWVGLWFVGGLVSLVAARTLL, and ILAVIALMGLWPLMLAIAVGV.

Belongs to the bacterial sugar transferase family.

It is found in the cell inner membrane. It carries out the reaction di-trans,octa-cis-undecaprenyl phosphate + UDP-alpha-D-glucose = alpha-D-glucosyl di-trans,octa-cis-undecaprenyl diphosphate + UMP. It functions in the pathway glycan biosynthesis; xanthan biosynthesis. In terms of biological role, is the initiating enzyme for the synthesis of the exopolysaccharide xanthan. Catalyzes the transfer of the glucose-1-phosphate moiety from UDP-Glc onto the carrier lipid undecaprenyl phosphate (C55-P), forming a phosphoanhydride bond yielding to glucosyl-pyrophosphoryl-undecaprenol (Glc-PP-C55). In Xanthomonas campestris pv. campestris, this protein is UDP-glucose:undecaprenyl-phosphate glucose-1-phosphate transferase (gumD).